We begin with the raw amino-acid sequence, 79 residues long: Dolichyl-diphosphooligosaccharide--protein glycosyltransferase subunit TMEM258 (79 aa).

Methionine 1 carries the post-translational modification N-acetylmethionine. Helical transmembrane passes span 17–37 (VFPHLTVVLLAIGMFFTAWFF) and 59–79 (VASLFMGFGVLFLLLWVGIYI).

This sequence belongs to the OST5 family. As to quaternary structure, component of the oligosaccharyltransferase (OST) complex. OST exists in two different complex forms which contain common core subunits RPN1, RPN2, OST48, OST4, DAD1 and TMEM258, either STT3A or STT3B as catalytic subunits, and form-specific accessory subunits. STT3A complex assembly occurs through the formation of 3 subcomplexes. Subcomplex 1 contains RPN1 and TMEM258, subcomplex 2 contains the STT3A-specific subunits STT3A, DC2/OSTC, and KCP2 as well as the core subunit OST4, and subcomplex 3 contains RPN2, DAD1, and OST48. The STT3A complex can form stable complexes with the Sec61 complex or with both the Sec61 and TRAP complexes.

The protein resides in the membrane. The protein localises to the endoplasmic reticulum. Its subcellular location is the cytoplasm. Its pathway is protein modification; protein glycosylation. Its function is as follows. Subunit of the oligosaccharyl transferase (OST) complex that catalyzes the initial transfer of a defined glycan (Glc(3)Man(9)GlcNAc(2) in eukaryotes) from the lipid carrier dolichol-pyrophosphate to an asparagine residue within an Asn-X-Ser/Thr consensus motif in nascent polypeptide chains, the first step in protein N-glycosylation. N-glycosylation occurs cotranslationally and the complex associates with the Sec61 complex at the channel-forming translocon complex that mediates protein translocation across the endoplasmic reticulum (ER). All subunits are required for a maximal enzyme activity. Involved in ER homeostasis in the colonic epithelium. This Bos taurus (Bovine) protein is Dolichyl-diphosphooligosaccharide--protein glycosyltransferase subunit TMEM258.